The primary structure comprises 356 residues: Nicotinate-nucleotide--dimethylbenzimidazole phosphoribosyltransferase (356 aa).

Glu-317 functions as the Proton acceptor in the catalytic mechanism.

This sequence belongs to the CobT family. Homodimer.

It catalyses the reaction 5,6-dimethylbenzimidazole + nicotinate beta-D-ribonucleotide = alpha-ribazole 5'-phosphate + nicotinate + H(+). It participates in nucleoside biosynthesis; alpha-ribazole biosynthesis; alpha-ribazole from 5,6-dimethylbenzimidazole: step 1/2. Functionally, catalyzes the synthesis of alpha-ribazole-5'-phosphate from nicotinate mononucleotide (NAMN) and 5,6-dimethylbenzimidazole (DMB). This is Nicotinate-nucleotide--dimethylbenzimidazole phosphoribosyltransferase from Salmonella typhi.